The sequence spans 565 residues: Arginine--tRNA ligase (565 aa).

The short motif at 128–138 (ANPTGPLHVGH) is the 'HIGH' region element.

This sequence belongs to the class-I aminoacyl-tRNA synthetase family. Monomer.

It localises to the cytoplasm. The enzyme catalyses tRNA(Arg) + L-arginine + ATP = L-arginyl-tRNA(Arg) + AMP + diphosphate. The chain is Arginine--tRNA ligase from Albidiferax ferrireducens (strain ATCC BAA-621 / DSM 15236 / T118) (Rhodoferax ferrireducens).